The primary structure comprises 209 residues: Claudin-4 (209 aa).

At 1-9 the chain is on the cytoplasmic side; that stretch reads MASMGLQVM. Residues 1–103 are interaction with EPHA2; sequence MASMGLQVMG…GVLLSVVGGK (103 aa). The helical transmembrane segment at 10–30 threads the bilayer; the sequence is GIALAVLGWLGAILSCALPMW. Residues 31 to 81 lie on the Extracellular side of the membrane; that stretch reads RVTAFIGSNIVTSQTIWEGLWMNCVVQSTGQMQCKVYDSLLALPQDLQAAR. Cysteine 54 and cysteine 64 are joined by a disulfide. The helical transmembrane segment at 82–102 threads the bilayer; that stretch reads ALIVICIILAVFGVLLSVVGG. Residues 103–117 are Cytoplasmic-facing; the sequence is KCTNCVDDESSKAKI. The helical transmembrane segment at 118-138 threads the bilayer; the sequence is MIVAGVVFLLAGLLVMVPVSW. Residues 139–160 are Extracellular-facing; the sequence is TANNVIRDFYNPLVASGQKREM. Residues 161–181 form a helical membrane-spanning segment; the sequence is GASLYVGWAAAGLLILGGALL. Over 182–209 the chain is Cytoplasmic; sequence CFNCPPRNDKPYSAKYSAARSAPASNYV. Tyrosine 208 carries the post-translational modification Phosphotyrosine; by EPHA2. The segment at 208–209 is interactions with TJP1, TJP2 and TJP3; the sequence is YV.

This sequence belongs to the claudin family. In terms of assembly, interacts with EPHA2; phosphorylates CLDN4 and may regulate tight junctions. Directly interacts with TJP1/ZO-1, TJP2/ZO-2 and TJP3/ZO-3. Interacts with CLDN1. Interacts with CLDN8. Phosphorylated. Phosphorylation by EPHA2 is stimulated by EFNA1 and alters interaction with TJP1.

Its subcellular location is the cell junction. It localises to the tight junction. The protein localises to the cell membrane. Channel-forming tight junction protein that mediates paracellular chloride transport in the kidney. Plays a critical role in the paracellular reabsorption of filtered chloride in the kidney collecting ducts. Claudins play a major role in tight junction-specific obliteration of the intercellular space, through calcium-independent cell-adhesion activity. The sequence is that of Claudin-4 (CLDN4) from Bos taurus (Bovine).